We begin with the raw amino-acid sequence, 72 residues long: Candidate secreted effector protein MPL124499 (72 aa).

A signal peptide spans 1 to 21 (MKLSIFAAIFMAFVSLNQVFG).

This sequence belongs to the CPGH1 family.

It localises to the secreted. The protein localises to the host cell. Its subcellular location is the host cytoplasm. The protein resides in the host nucleus. In terms of biological role, rust effector delivered into infected tissues to modulate host functions and contribute to pathogen virulence. Enhances leaf colonization by the bacteria Pseudomonas syringae and the oomycete Hyaloperonospora arabidopsidis pathogens in an Arabidopsis thaliana infection model. The sequence is that of Candidate secreted effector protein MPL124499 from Melampsora larici-populina (strain 98AG31 / pathotype 3-4-7) (Poplar leaf rust fungus).